The following is a 131-amino-acid chain: Large ribosomal subunit protein bL21 (131 aa).

The tract at residues 111–131 (VAAATGTADARRAAHNASAKE) is disordered.

The protein belongs to the bacterial ribosomal protein bL21 family. In terms of assembly, part of the 50S ribosomal subunit. Contacts protein L20.

Its function is as follows. This protein binds to 23S rRNA in the presence of protein L20. The polypeptide is Large ribosomal subunit protein bL21 (Cereibacter sphaeroides (strain ATCC 17029 / ATH 2.4.9) (Rhodobacter sphaeroides)).